Here is a 499-residue protein sequence, read N- to C-terminus: Putative hydrolase YuaR (499 aa).

An N-terminal signal peptide occupies residues 1 to 26; sequence MRVIMKPLRRTLVFFIFSVFLCGTVS. One can recognise an AB hydrolase-1 domain in the interval 94 to 393; that stretch reads GSVIIISGGP…DAFPAVNFER (300 aa). Catalysis depends on S207, which acts as the Nucleophile. The active site involves D433. The Proton donor role is filled by H460.

It belongs to the peptidase S33 family.

This Escherichia coli (strain K12) protein is Putative hydrolase YuaR (yuaR).